We begin with the raw amino-acid sequence, 1405 residues long: DNA-directed RNA polymerase subunit beta' (1405 aa).

Residues C70, C72, C85, and C88 each coordinate Zn(2+). Residues D460, D462, and D464 each contribute to the Mg(2+) site. Zn(2+) contacts are provided by C815, C890, C897, and C900.

The protein belongs to the RNA polymerase beta' chain family. The RNAP catalytic core consists of 2 alpha, 1 beta, 1 beta' and 1 omega subunit. When a sigma factor is associated with the core the holoenzyme is formed, which can initiate transcription. It depends on Mg(2+) as a cofactor. Requires Zn(2+) as cofactor.

It carries out the reaction RNA(n) + a ribonucleoside 5'-triphosphate = RNA(n+1) + diphosphate. Functionally, DNA-dependent RNA polymerase catalyzes the transcription of DNA into RNA using the four ribonucleoside triphosphates as substrates. This is DNA-directed RNA polymerase subunit beta' from Xanthomonas campestris pv. campestris (strain 8004).